Consider the following 308-residue polypeptide: Homoserine O-acetyltransferase (308 aa).

The active-site Acyl-thioester intermediate is C142. Substrate-binding residues include K163 and S192. H235 functions as the Proton acceptor in the catalytic mechanism. Residue E237 is part of the active site. A substrate-binding site is contributed by R249.

Belongs to the MetA family.

It is found in the cytoplasm. The catalysed reaction is L-homoserine + acetyl-CoA = O-acetyl-L-homoserine + CoA. It functions in the pathway amino-acid biosynthesis; L-methionine biosynthesis via de novo pathway; O-acetyl-L-homoserine from L-homoserine: step 1/1. Its function is as follows. Transfers an acetyl group from acetyl-CoA to L-homoserine, forming acetyl-L-homoserine. The chain is Homoserine O-acetyltransferase from Agrobacterium fabrum (strain C58 / ATCC 33970) (Agrobacterium tumefaciens (strain C58)).